A 203-amino-acid chain; its full sequence is Guanylate kinase (203 aa).

The Guanylate kinase-like domain occupies 4–183; it reads GKLFVISAPS…ASTLLKSIIW (180 aa). Residue 11–18 participates in ATP binding; sequence APSGAGKT.

Belongs to the guanylate kinase family.

The protein resides in the cytoplasm. It carries out the reaction GMP + ATP = GDP + ADP. Essential for recycling GMP and indirectly, cGMP. The chain is Guanylate kinase from Desulfotalea psychrophila (strain LSv54 / DSM 12343).